The chain runs to 370 residues: Glutamate 5-kinase (370 aa).

Lys17 provides a ligand contact to ATP. Substrate-binding residues include Ser56, Asp143, and Asn155. 175-176 (SD) contributes to the ATP binding site. The region spanning 280-357 (KGEITVDAGA…DEIEGILGYP (78 aa)) is the PUA domain.

Belongs to the glutamate 5-kinase family.

It localises to the cytoplasm. It catalyses the reaction L-glutamate + ATP = L-glutamyl 5-phosphate + ADP. The protein operates within amino-acid biosynthesis; L-proline biosynthesis; L-glutamate 5-semialdehyde from L-glutamate: step 1/2. Its function is as follows. Catalyzes the transfer of a phosphate group to glutamate to form L-glutamate 5-phosphate. The protein is Glutamate 5-kinase of Paracoccus denitrificans (strain Pd 1222).